A 318-amino-acid chain; its full sequence is Bis(5'-nucleosyl)-tetraphosphatase, symmetrical (318 aa).

The segment at 269–318 (PGREVTGPAPVARAPRRPRERLGRQRSRGNRGNAGNTAVPAKPPVDTPQD) is disordered. Over residues 282–297 (APRRPRERLGRQRSRG) the composition is skewed to basic residues. The segment covering 309-318 (AKPPVDTPQD) has biased composition (pro residues).

It belongs to the Ap4A hydrolase family.

The enzyme catalyses P(1),P(4)-bis(5'-adenosyl) tetraphosphate + H2O = 2 ADP + 2 H(+). Its function is as follows. Hydrolyzes diadenosine 5',5'''-P1,P4-tetraphosphate to yield ADP. This chain is Bis(5'-nucleosyl)-tetraphosphatase, symmetrical, found in Xanthomonas oryzae pv. oryzae (strain MAFF 311018).